The primary structure comprises 132 residues: Fatty acid-binding protein 1 (132 aa).

An N-acetylalanine modification is found at Ala2.

Belongs to the calycin superfamily. Fatty-acid binding protein (FABP) family.

This chain is Fatty acid-binding protein 1 (FABP-1), found in Fasciola gigantica (Giant liver fluke).